The sequence spans 463 residues: mRNA-capping enzyme subunit alpha (463 aa).

The active-site N6-GMP-lysine intermediate is the K66. The interval W404 to E463 is disordered. The segment covering D441 to D455 has biased composition (acidic residues).

Belongs to the eukaryotic GTase family. As to quaternary structure, heterodimer. The mRNA-capping enzyme is composed of two separate chains alpha and beta, respectively a mRNA guanylyltransferase and an mRNA 5'-triphosphate monophosphatase.

It is found in the nucleus. The enzyme catalyses a 5'-end diphospho-ribonucleoside in mRNA + GTP + H(+) = a 5'-end (5'-triphosphoguanosine)-ribonucleoside in mRNA + diphosphate. Its function is as follows. Second step of mRNA capping. Transfer of the GMP moiety of GTP to the 5'-end of RNA via an enzyme-GMP covalent reaction intermediate. This Eremothecium gossypii (strain ATCC 10895 / CBS 109.51 / FGSC 9923 / NRRL Y-1056) (Yeast) protein is mRNA-capping enzyme subunit alpha (CEG1).